The chain runs to 615 residues: Alpha-1,3-galactosidase B (615 aa).

The first 23 residues, 1 to 23 (MRTFLSLKTCLLSALLLCVNSIA), serve as a signal peptide directing secretion. PbH1 repeat units lie at residues 282-313 (SKNISFNDVHIIPNTSKKRVLSGHDDGFHFMG), 423-445 (TPDAEIRNCHFGSCRARGLLVST), 446-467 (PGKVIIENNVFESSGSAILIAG), 478-500 (VKDVLIRNNDFRYPCNSSIYQFC), 520-541 (HRNIRIMDNTFHLFDYPILFAR), and 543-573 (VNGLTFSSNTLIRDTTYQPYHYRKEGITLEA).

Belongs to the glycosyl hydrolase 110 family. B subfamily.

The enzyme catalyses Hydrolysis of terminal, non-reducing branched (1-&gt;3)-alpha-D-galactosidic residues, producing free D-galactose.. It carries out the reaction Hydrolysis of terminal, non-reducing linear (1-&gt;3)-alpha-D-galactosidic residues, producing free D-galactose.. The catalysed reaction is Hydrolysis of terminal, non-reducing alpha-D-galactose residues in alpha-D-galactosides, including galactose oligosaccharides, galactomannans and galactolipids.. Its function is as follows. Alpha-galactosidase. Removes both branched alpha-1,3-linked galactose residues of blood group B antigens and linear alpha-1,3-linked galactose structures. The sequence is that of Alpha-1,3-galactosidase B (glaB) from Bacteroides thetaiotaomicron (strain ATCC 29148 / DSM 2079 / JCM 5827 / CCUG 10774 / NCTC 10582 / VPI-5482 / E50).